Here is a 99-residue protein sequence, read N- to C-terminus: Integration host factor subunit alpha (99 aa).

This sequence belongs to the bacterial histone-like protein family. As to quaternary structure, heterodimer of an alpha and a beta chain.

This protein is one of the two subunits of integration host factor, a specific DNA-binding protein that functions in genetic recombination as well as in transcriptional and translational control. The sequence is that of Integration host factor subunit alpha (ihfA) from Xanthomonas axonopodis pv. citri (strain 306).